A 603-amino-acid polypeptide reads, in one-letter code: Terpenoid synthase 22 (603 aa).

4 residues coordinate Mg(2+): aspartate 356, aspartate 360, asparagine 500, and glutamate 508. The DDXXD motif motif lies at 356-360 (DDTCD).

The protein belongs to the terpene synthase family. Tpsa subfamily. The cofactor is Mg(2+). Requires Mn(2+) as cofactor. In terms of tissue distribution, predominantly expressed in siliques but also in flowers.

The protein resides in the cytoplasm. It participates in secondary metabolite biosynthesis; terpenoid biosynthesis. Its function is as follows. Involved in terpene biosynthesis in roots. Possesses sesquiterpene (C15) synthase activity in vitro. Does not seem to be involved in diterpene (C20) biosynthesis. This chain is Terpenoid synthase 22, found in Arabidopsis thaliana (Mouse-ear cress).